Reading from the N-terminus, the 132-residue chain is MWNEFKKFAFKGNVVDLAVGVVIGAAFGKIVSSLVKDIITPLLGMVLGGVDFTSLHFGYGKSAVMYGNFIQTIFDFLIIAASIFMFVKVFNKLTSKKEEEKEEEIPEPTKEEELLGEIRDLLKQQNSSKDRA.

The next 3 membrane-spanning stretches (helical) occupy residues 14 to 34, 38 to 58, and 67 to 87; these read VVDL…VSSL, IITP…LHFG, and GNFI…FMFV.

Belongs to the MscL family. Homopentamer.

It localises to the cell membrane. In terms of biological role, channel that opens in response to stretch forces in the membrane lipid bilayer. May participate in the regulation of osmotic pressure changes within the cell. This chain is Large-conductance mechanosensitive channel, found in Bacillus cereus (strain B4264).